The chain runs to 498 residues: MRLPYILALDQGTTSSRAIVFDQDGVVRSVAQREFTQIFPQAGWVEHDPEEIWASQISVAVEALSRAELRSRHVAAIAITNQRETAVVWDRETGRPVYNAIVWQDRRTAGFCDQLKAAGHEEFVQQRTGLLIDSYFSGSKVRWILDNVPQARSLAERGRLAFGTVDSWLIWKLTSGKLHITDVSNASRTMLFNIHTCQWDEELLRLLEIPASMLPEVRSSSEVYGTVQTSLGLESIPIAGIAGDQQASLFGQRCTSPGMAKNTYGTGCFMLQNTGERAVPTSNRLVTTVAWKIGDVVEYALEGSVFIGGAVVQWLRDGLRLVRSSGEFQELANSVKDNGGVYVVPAFVGLGAPHWDQYARGGIFGITRGTTDGHVARAALESIAYQVADLLDAMQRDTGVPLPELRVDGGAAANETLLQFQADIMGVPVVRPSVTETTALGAAFLAGIAVGLWSDPQVIAKMPVEQKRFEPRMGSAEALALRHQWEKALSRVKGWEEA.

T13 contributes to the ADP binding site. Positions 13, 14, and 15 each coordinate ATP. T13 lines the sn-glycerol 3-phosphate pocket. An ADP-binding site is contributed by R17. Positions 83, 84, 135, and 244 each coordinate sn-glycerol 3-phosphate. Residues R83, E84, Y135, D244, and Q245 each contribute to the glycerol site. ADP is bound by residues T266 and G309. 4 residues coordinate ATP: T266, G309, Q313, and G410. The ADP site is built by G410 and N414.

This sequence belongs to the FGGY kinase family.

It catalyses the reaction glycerol + ATP = sn-glycerol 3-phosphate + ADP + H(+). It participates in polyol metabolism; glycerol degradation via glycerol kinase pathway; sn-glycerol 3-phosphate from glycerol: step 1/1. With respect to regulation, inhibited by fructose 1,6-bisphosphate (FBP). Key enzyme in the regulation of glycerol uptake and metabolism. Catalyzes the phosphorylation of glycerol to yield sn-glycerol 3-phosphate. This Koribacter versatilis (strain Ellin345) protein is Glycerol kinase.